Here is a 284-residue protein sequence, read N- to C-terminus: D-tagatose-1,6-bisphosphate aldolase subunit GatY (284 aa).

Asp-82 serves as the catalytic Proton donor. Positions 83 and 180 each coordinate Zn(2+). Residue Cys-181 participates in dihydroxyacetone phosphate binding. His-208 lines the Zn(2+) pocket. Dihydroxyacetone phosphate is bound by residues 209 to 211 and 230 to 233; these read GAS and NVAT.

This sequence belongs to the class II fructose-bisphosphate aldolase family. TagBP aldolase GatY subfamily. Forms a complex with GatZ. The cofactor is Zn(2+).

It carries out the reaction D-tagatofuranose 1,6-bisphosphate = D-glyceraldehyde 3-phosphate + dihydroxyacetone phosphate. It functions in the pathway carbohydrate metabolism; D-tagatose 6-phosphate degradation; D-glyceraldehyde 3-phosphate and glycerone phosphate from D-tagatose 6-phosphate: step 2/2. Functionally, catalytic subunit of the tagatose-1,6-bisphosphate aldolase GatYZ, which catalyzes the reversible aldol condensation of dihydroxyacetone phosphate (DHAP or glycerone-phosphate) with glyceraldehyde 3-phosphate (G3P) to produce tagatose 1,6-bisphosphate (TBP). Requires GatZ subunit for full activity and stability. Is involved in the catabolism of galactitol. This chain is D-tagatose-1,6-bisphosphate aldolase subunit GatY, found in Salmonella paratyphi A (strain ATCC 9150 / SARB42).